The primary structure comprises 176 residues: ATP-dependent protease subunit HslV (176 aa).

Residue threonine 4 is part of the active site. Positions 158, 161, and 164 each coordinate Na(+).

It belongs to the peptidase T1B family. HslV subfamily. As to quaternary structure, a double ring-shaped homohexamer of HslV is capped on each side by a ring-shaped HslU homohexamer. The assembly of the HslU/HslV complex is dependent on binding of ATP.

The protein resides in the cytoplasm. The catalysed reaction is ATP-dependent cleavage of peptide bonds with broad specificity.. With respect to regulation, allosterically activated by HslU binding. Protease subunit of a proteasome-like degradation complex believed to be a general protein degrading machinery. The protein is ATP-dependent protease subunit HslV of Rhizobium meliloti (strain 1021) (Ensifer meliloti).